Consider the following 414-residue polypeptide: Tyrosine--tRNA ligase (414 aa).

Y35 contributes to the L-tyrosine binding site. The short motif at 40–49 (PTADSLHVGH) is the 'HIGH' region element. L-tyrosine is bound by residues Y164 and Q168. The 'KMSKS' region motif lies at 226 to 230 (KFGKT). ATP is bound at residue K229. The S4 RNA-binding domain maps to 347–414 (TKVIDALIEV…KKKYFVILIK (68 aa)).

The protein belongs to the class-I aminoacyl-tRNA synthetase family. TyrS type 1 subfamily. As to quaternary structure, homodimer.

Its subcellular location is the cytoplasm. It carries out the reaction tRNA(Tyr) + L-tyrosine + ATP = L-tyrosyl-tRNA(Tyr) + AMP + diphosphate + H(+). Catalyzes the attachment of tyrosine to tRNA(Tyr) in a two-step reaction: tyrosine is first activated by ATP to form Tyr-AMP and then transferred to the acceptor end of tRNA(Tyr). This chain is Tyrosine--tRNA ligase, found in Mycoplasma mycoides subsp. mycoides SC (strain CCUG 32753 / NCTC 10114 / PG1).